The primary structure comprises 371 residues: Ferredoxin--NADP reductase, apicoplast (371 aa).

The transit peptide at 1–18 (MKIRFVFILSVLISGVCC) directs the protein to the apicoplast. Residues K68, 155 to 159 (ARLYS), 172 to 179 (AIKIHKYE), 192 to 194 (YCS), and T235 each bind FAD. Residues 68-218 (KNPLKCKIVD…TGAHGYFNLP (151 aa)) form the FAD-binding FR-type domain. K174 is an NADP(+) binding site. NADP(+)-binding positions include 272 to 273 (VY), S302, 313 to 315 (YVQ), and 341 to 343 (HKS). Residues K342 and Y371 each contribute to the FAD site.

This sequence belongs to the ferredoxin--NADP reductase type 1 family. Monomer. Homodimer; disulfide linked. NADP binding accelerates formation of an inactive, disulfide-linked homodimer when the protein is exposed to air for 24 hours or more (in vitro); the physiological relevance of this is uncertain. The cofactor is FAD.

The protein localises to the plastid. It is found in the apicoplast. It carries out the reaction 2 reduced [2Fe-2S]-[ferredoxin] + NADP(+) + H(+) = 2 oxidized [2Fe-2S]-[ferredoxin] + NADPH. In terms of biological role, may play a role in the terminal step of the DOXP/MEP pathway for isoprenoid precursor biosynthesis. This Plasmodium falciparum (isolate 3D7) protein is Ferredoxin--NADP reductase, apicoplast.